Here is a 248-residue protein sequence, read N- to C-terminus: tRNA (guanine-N(1)-)-methyltransferase (248 aa).

Residues glycine 113 and 133–138 (IGDFVL) each bind S-adenosyl-L-methionine.

Belongs to the RNA methyltransferase TrmD family. Homodimer.

It is found in the cytoplasm. It carries out the reaction guanosine(37) in tRNA + S-adenosyl-L-methionine = N(1)-methylguanosine(37) in tRNA + S-adenosyl-L-homocysteine + H(+). In terms of biological role, specifically methylates guanosine-37 in various tRNAs. The polypeptide is tRNA (guanine-N(1)-)-methyltransferase (Dehalococcoides mccartyi (strain CBDB1)).